Here is a 759-residue protein sequence, read N- to C-terminus: Forkhead box protein M1 (759 aa).

Disordered regions lie at residues 1-54 (MRTS…AESS) and 94-165 (KGKE…QRQE). Positions 36–54 (PGQQEPTQAQASQDVAESS) are enriched in polar residues. A compositionally biased stretch (low complexity) spans 141-151 (LGPKPGAKGVP). Glycyl lysine isopeptide (Lys-Gly) (interchain with G-Cter in SUMO2) cross-links involve residues K200 and K324. The segment at residues 234 to 326 (ERPPYSYMAM…LTLDQVFKPL (93 aa)) is a DNA-binding region (fork-head). Residues 328–349 (PGSPQSPEHLESQQKRPNPELR) are disordered. Residue S330 is modified to Phosphoserine. Basic and acidic residues predominate over residues 335-349 (EHLESQQKRPNPELR). K355 participates in a covalent cross-link: Glycyl lysine isopeptide (Lys-Gly) (interchain with G-Cter in SUMO2). At S375 the chain carries Phosphoserine; by CHEK2. Residues K421 and K439 each participate in a glycyl lysine isopeptide (Lys-Gly) (interchain with G-Cter in SUMO2) cross-link. At S521 the chain carries Phosphoserine. 3 disordered regions span residues 530-556 (LVTK…CLDE), 572-643 (MEIL…PQGA), and 681-706 (LASD…LQVP). The segment covering 531–542 (VTKRREKREVSR) has biased composition (basic and acidic residues). The segment covering 604–613 (PVSSTPSKSV) has biased composition (polar residues). At T608 the chain carries Phosphothreonine; by CDK1. T624 carries the phosphothreonine modification. S726 and S735 each carry phosphoserine; by PLK1.

Post-translationally, phosphorylated in M (mitotic) phase. Phosphorylation by the checkpoint kinase CHEK2 in response to DNA damage increases the FOXM1 protein stability probably stimulating the transcription of genes involved in DNA repair. Phosphorylated by CDK1 in late S and G2 phases, creating docking sites for the POLO box domains of PLK1. Subsequently, PLK1 binds and phosphorylates FOXM1, leading to activation of transcriptional activity and subsequent enhanced expression of key mitotic regulators. Phosphorylated by GSK3B leading to ubiquitination and proteasomal degradation. As to expression, highly expressed in thymus and testis, but weakly in intestine and lung. Appears to be expressed only in adult organs containing proliferating/cycling cells or in response to growth factors.

The protein localises to the nucleus. Functionally, transcription factor regulating the expression of cell cycle genes essential for DNA replication and mitosis. Plays a role in the control of cell proliferation. Also plays a role in DNA break repair, participating in the DNA damage checkpoint response. Promotes transcription of PHB2. The protein is Forkhead box protein M1 (Foxm1) of Rattus norvegicus (Rat).